Reading from the N-terminus, the 636-residue chain is Alpha-L-iduronidase (636 aa).

The N-terminal stretch at 1-16 (MLSLLLVLTTLARIHA) is a signal peptide. Alpha-D-mannopyranose-binding residues include proline 39, isoleucine 43, and histidine 45. Alpha-L-iduronate-binding residues include histidine 78, asparagine 169, and glutamate 170. The active-site Proton donor is the glutamate 170. N-linked (GlcNAc...) asparagine glycosylation occurs at asparagine 180. Lysine 257 contributes to the alpha-L-iduronate binding site. Asparagine 268 carries an N-linked (GlcNAc...) asparagine glycan. Glutamate 293 and glycine 299 together coordinate alpha-L-iduronate. Residue glutamate 293 is the Nucleophile of the active site. Tryptophan 300 contributes to the alpha-D-mannopyranose binding site. The alpha-L-iduronate site is built by aspartate 342 and arginine 356. N-linked (GlcNAc...) asparagine glycosylation is found at asparagine 365, asparagine 448, asparagine 453, and asparagine 483. Cysteine 529 and cysteine 565 form a disulfide bridge. N-linked (GlcNAc...) asparagine glycosylation is present at asparagine 622.

Belongs to the glycosyl hydrolase 39 family.

The protein resides in the lysosome. The enzyme catalyses Hydrolysis of unsulfated alpha-L-iduronosidic linkages in dermatan sulfate.. Its function is as follows. Essential lysosomal hydrolase responsible for the degradation of glycosaminoglycans (GAG) such as heparan sulfate. Required for lysosome function and autophagy. Consequently, has an essential role in the development, maintenance and function of various cells, tissues, and organs, including the muscles and the central nervous system (CNS). The sequence is that of Alpha-L-iduronidase from Drosophila melanogaster (Fruit fly).